Consider the following 141-residue polypeptide: Large ribosomal subunit protein uL11 (141 aa).

The protein belongs to the universal ribosomal protein uL11 family. As to quaternary structure, part of the ribosomal stalk of the 50S ribosomal subunit. Interacts with L10 and the large rRNA to form the base of the stalk. L10 forms an elongated spine to which L12 dimers bind in a sequential fashion forming a multimeric L10(L12)X complex. In terms of processing, one or more lysine residues are methylated.

Forms part of the ribosomal stalk which helps the ribosome interact with GTP-bound translation factors. This chain is Large ribosomal subunit protein uL11, found in Synechococcus sp. (strain JA-3-3Ab) (Cyanobacteria bacterium Yellowstone A-Prime).